Here is a 273-residue protein sequence, read N- to C-terminus: Putative phosphoenolpyruvate synthase regulatory protein (273 aa).

153–160 (GVSRCGKT) provides a ligand contact to ADP.

Belongs to the pyruvate, phosphate/water dikinase regulatory protein family. PSRP subfamily.

The enzyme catalyses [pyruvate, water dikinase] + ADP = [pyruvate, water dikinase]-phosphate + AMP + H(+). It catalyses the reaction [pyruvate, water dikinase]-phosphate + phosphate + H(+) = [pyruvate, water dikinase] + diphosphate. In terms of biological role, bifunctional serine/threonine kinase and phosphorylase involved in the regulation of the phosphoenolpyruvate synthase (PEPS) by catalyzing its phosphorylation/dephosphorylation. This chain is Putative phosphoenolpyruvate synthase regulatory protein, found in Yersinia enterocolitica serotype O:8 / biotype 1B (strain NCTC 13174 / 8081).